The chain runs to 343 residues: L-ornithine/L-arginine 3-hydroxylase (343 aa).

2 residues coordinate Fe cation: histidine 147 and glutamate 149. Polar residues predominate over residues 199–215; sequence MPDNSHLPQNTAESTGD. Positions 199 to 218 are disordered; it reads MPDNSHLPQNTAESTGDPTK. A Fe cation-binding site is contributed by histidine 302. A 2-oxoglutarate-binding site is contributed by arginine 316.

The protein belongs to the clavaminate synthase family. Fe(2+) is required as a cofactor.

The enzyme catalyses L-ornithine + 2-oxoglutarate + O2 = (3S)-3-hydroxy-L-ornithine + succinate + CO2. The catalysed reaction is L-arginine + 2-oxoglutarate + O2 = (2S,3S)-hydroxyarginine + succinate + CO2. In terms of biological role, alpha-ketoglutarate-dependent dioxygenase that in vitro catalyzes the regio- and stereoselective hydroxylation of L-ornithine and L-arginine, leading to (3S)-3-hydroxy-L-ornithine and (3S)-3-hydroxy-L-arginine, respectively. Cannot use L-lysine, D-ornithine, or D-arginine as substrate. In Catenulispora acidiphila (strain DSM 44928 / JCM 14897 / NBRC 102108 / NRRL B-24433 / ID139908), this protein is L-ornithine/L-arginine 3-hydroxylase.